A 459-amino-acid chain; its full sequence is ATP-dependent protease ATPase subunit HslU (459 aa).

ATP-binding positions include valine 18, 60–65 (GVGKTE), aspartate 272, glutamate 337, and arginine 409.

This sequence belongs to the ClpX chaperone family. HslU subfamily. In terms of assembly, a double ring-shaped homohexamer of HslV is capped on each side by a ring-shaped HslU homohexamer. The assembly of the HslU/HslV complex is dependent on binding of ATP.

The protein resides in the cytoplasm. ATPase subunit of a proteasome-like degradation complex; this subunit has chaperone activity. The binding of ATP and its subsequent hydrolysis by HslU are essential for unfolding of protein substrates subsequently hydrolyzed by HslV. HslU recognizes the N-terminal part of its protein substrates and unfolds these before they are guided to HslV for hydrolysis. The sequence is that of ATP-dependent protease ATPase subunit HslU from Thermoanaerobacter pseudethanolicus (strain ATCC 33223 / 39E) (Clostridium thermohydrosulfuricum).